The primary structure comprises 420 residues: Dihydrolipoyllysine-residue succinyltransferase component of 2-oxoglutarate dehydrogenase complex (420 aa).

The 76-residue stretch at 1–76 folds into the Lipoyl-binding domain; it reads MAEVKVPELA…EVGQAVAVVG (76 aa). Lysine 42 is modified (N6-lipoyllysine). The interval 75-201 is disordered; that stretch reads VGEGQVNTSN…EKMSRRKKTA (127 aa). Residues 81–90 are compositionally biased toward polar residues; it reads NTSNDSSNES. The segment covering 91 to 102 has biased composition (basic and acidic residues); the sequence is SQKDEAKEKETP. Over residues 103 to 127 the composition is skewed to polar residues; it reads KQSNPNSSESENTQDNSQQRINATP. Residues 124–160 form the Peripheral subunit-binding (PSBD) domain; that stretch reads NATPSARRHARKNGVDLSEVSGKGNDVLRKDDVENSQ. Residues 149–158 show a composition bias toward basic and acidic residues; sequence DVLRKDDVEN. A compositionally biased stretch (low complexity) spans 159-188; the sequence is SQKSSSQTAKSESKSQNSGSKQSNNNPSKP. Catalysis depends on residues histidine 391 and aspartate 395.

This sequence belongs to the 2-oxoacid dehydrogenase family. Forms a 24-polypeptide structural core with octahedral symmetry. Part of the 2-oxoglutarate dehydrogenase (OGDH) complex composed of E1 (2-oxoglutarate dehydrogenase), E2 (dihydrolipoamide succinyltransferase) and E3 (dihydrolipoamide dehydrogenase); the complex contains multiple copies of the three enzymatic components (E1, E2 and E3). It depends on (R)-lipoate as a cofactor.

It catalyses the reaction N(6)-[(R)-dihydrolipoyl]-L-lysyl-[protein] + succinyl-CoA = N(6)-[(R)-S(8)-succinyldihydrolipoyl]-L-lysyl-[protein] + CoA. It participates in amino-acid degradation; L-lysine degradation via saccharopine pathway; glutaryl-CoA from L-lysine: step 6/6. E2 component of the 2-oxoglutarate dehydrogenase (OGDH) complex which catalyzes the second step in the conversion of 2-oxoglutarate to succinyl-CoA and CO(2). The polypeptide is Dihydrolipoyllysine-residue succinyltransferase component of 2-oxoglutarate dehydrogenase complex (odhB) (Staphylococcus epidermidis (strain ATCC 12228 / FDA PCI 1200)).